Consider the following 363-residue polypeptide: Fructose-bisphosphate aldolase C (363 aa).

The substrate site is built by R56 and K147. The active-site Schiff-base intermediate with dihydroxyacetone-P is K230.

Belongs to the class I fructose-bisphosphate aldolase family. Homotetramer. Expressed in brain but not in liver or muscle.

It carries out the reaction beta-D-fructose 1,6-bisphosphate = D-glyceraldehyde 3-phosphate + dihydroxyacetone phosphate. It participates in carbohydrate degradation; glycolysis; D-glyceraldehyde 3-phosphate and glycerone phosphate from D-glucose: step 4/4. The polypeptide is Fructose-bisphosphate aldolase C (aldoc) (Carassius auratus (Goldfish)).